We begin with the raw amino-acid sequence, 153 residues long: MAKIKPVHILIVEARFYDDMADAMLDGAKHALDAAGATYDIVTVPGALEIPAAIAMALDGADEGGAEYDGFVALGMVIRGETYHFDIVANESARALMDLAVSESLALGNGILTVENDEQAWARARRTEGDKGGFAARAALTMIELKQRLGAEK.

5-amino-6-(D-ribitylamino)uracil is bound by residues Phe16, 47 to 49 (ALE), and 76 to 78 (MVI). Residue 81–82 (ET) participates in (2S)-2-hydroxy-3-oxobutyl phosphate binding. The active-site Proton donor is His84. 5-amino-6-(D-ribitylamino)uracil is bound at residue Asn109. Arg123 is a binding site for (2S)-2-hydroxy-3-oxobutyl phosphate.

This sequence belongs to the DMRL synthase family.

It catalyses the reaction (2S)-2-hydroxy-3-oxobutyl phosphate + 5-amino-6-(D-ribitylamino)uracil = 6,7-dimethyl-8-(1-D-ribityl)lumazine + phosphate + 2 H2O + H(+). The protein operates within cofactor biosynthesis; riboflavin biosynthesis; riboflavin from 2-hydroxy-3-oxobutyl phosphate and 5-amino-6-(D-ribitylamino)uracil: step 1/2. In terms of biological role, catalyzes the formation of 6,7-dimethyl-8-ribityllumazine by condensation of 5-amino-6-(D-ribitylamino)uracil with 3,4-dihydroxy-2-butanone 4-phosphate. This is the penultimate step in the biosynthesis of riboflavin. This chain is 6,7-dimethyl-8-ribityllumazine synthase 1, found in Rhizobium meliloti (strain 1021) (Ensifer meliloti).